The primary structure comprises 400 residues: Nicotinate phosphoribosyltransferase (400 aa).

His220 bears the Phosphohistidine; by autocatalysis mark.

The protein belongs to the NAPRTase family. In terms of processing, transiently phosphorylated on a His residue during the reaction cycle. Phosphorylation strongly increases the affinity for substrates and increases the rate of nicotinate D-ribonucleotide production. Dephosphorylation regenerates the low-affinity form of the enzyme, leading to product release.

The enzyme catalyses nicotinate + 5-phospho-alpha-D-ribose 1-diphosphate + ATP + H2O = nicotinate beta-D-ribonucleotide + ADP + phosphate + diphosphate. Its pathway is cofactor biosynthesis; NAD(+) biosynthesis; nicotinate D-ribonucleotide from nicotinate: step 1/1. Its function is as follows. Catalyzes the synthesis of beta-nicotinate D-ribonucleotide from nicotinate and 5-phospho-D-ribose 1-phosphate at the expense of ATP. The protein is Nicotinate phosphoribosyltransferase of Citrobacter koseri (strain ATCC BAA-895 / CDC 4225-83 / SGSC4696).